A 166-amino-acid chain; its full sequence is Ribosome maturation factor RimM (166 aa).

The region spanning 90–165 (NDNDAFSIFY…IITLKNIEGL (76 aa)) is the PRC barrel domain.

The protein belongs to the RimM family. As to quaternary structure, binds ribosomal protein uS19.

The protein localises to the cytoplasm. In terms of biological role, an accessory protein needed during the final step in the assembly of 30S ribosomal subunit, possibly for assembly of the head region. Essential for efficient processing of 16S rRNA. May be needed both before and after RbfA during the maturation of 16S rRNA. It has affinity for free ribosomal 30S subunits but not for 70S ribosomes. The chain is Ribosome maturation factor RimM from Mesoplasma florum (strain ATCC 33453 / NBRC 100688 / NCTC 11704 / L1) (Acholeplasma florum).